The chain runs to 532 residues: MGAGERAAGGGGAQDPGAGCGSRALSALCLLLSVGSAAACLLLGAQAAALHGRVAALEQERELLRHAGPSGALAAWAETHLERLLREKLDGVAKLRTVREAPSECICPPGPPGRRGKPGRRGDPGPPGQSGRDGYPGPLGLDGKPGLPGPKGEKGTPGDFGPRGAQGQDGVAGPPGPPGPPGARGPPGDTGKDGPRGAQGPAGPRGEPGQDGEMGPKGPPGPKGEPGIPGKKGDDGMANQPGLPGPPGPKGEPGDVGPRGENGVDGIPGLKGEPGHPGVDGATGPRGAPGLKGEQGDTVVIDYDGRILDALKGPPGPQGAPGPPGIPGAKGELGLPGAPGIDGEKGPKGPKGDPGEPGPAGPKGETGEMGLSGLPGADGPKGEKGESASDHLQESLAQIIVEPGPPGPPGPPGPMGLQGIQGPKGLDGAKGEKGTSGERGPHGLPGPVGPPGLIGLPGTKGEKGRPGEPGLDGFPGPRGEKGDRSERGEKGERGVPGRKGVKGQKGEPGPPGLDQPCPVGPDGLPVPGCWHK.

At 1–23 (MGAGERAAGGGGAQDPGAGCGSR) the chain is on the cytoplasmic side. A helical; Signal-anchor for type II membrane protein transmembrane segment spans residues 24-45 (ALSALCLLLSVGSAAACLLLGA). The Extracellular segment spans residues 46–532 (QAAALHGRVA…GLPVPGCWHK (487 aa)). Disordered regions lie at residues 102–296 (PSEC…GEQG) and 308–532 (LDAL…CWHK). Collagen-like domains are found at residues 108–166 (PPGP…RGAQ), 173–232 (GPPG…PGKK), 240–298 (QPGL…QGDT), and 313–372 (GPPG…MGLS). Low complexity predominate over residues 129–145 (QSGRDGYPGPLGLDGKP). A compositionally biased stretch (pro residues) spans 174–184 (PPGPPGPPGAR). Residues 196–207 (RGAQGPAGPRGE) are compositionally biased toward low complexity. Residues 314-326 (PPGPQGAPGPPGI) are compositionally biased toward pro residues. Composition is skewed to basic and acidic residues over residues 342 to 354 (DGEKGPKGPKGDP) and 380 to 393 (PKGEKGESASDHLQ). The segment covering 403–414 (PGPPGPPGPPGP) has biased composition (pro residues). Collagen-like domains lie at 404-452 (GPPG…GPPG) and 455-514 (GLPG…PGLD). Composition is skewed to basic and acidic residues over residues 427–441 (DGAKGEKGTSGERGP) and 478–495 (RGEKGDRSERGEKGERGV).

In terms of assembly, homotrimer. Undergoes proteolytic cleavage by furin protease to yield a 60 kDa soluble form that forms a homotrimer and exhibits a low affinity interaction with heparin.

It is found in the cell membrane. This is Collagen alpha-1(XXIII) chain (Col23a1) from Mus musculus (Mouse).